A 331-amino-acid polypeptide reads, in one-letter code: Holliday junction branch migration complex subunit RuvB (331 aa).

The tract at residues 4–182 is large ATPase domain (RuvB-L); sequence KDILQSSECI…FGIPMHLEFY (179 aa). Residues R22, G63, K66, T67, T68, 129–131, R172, Y182, and R219 contribute to the ATP site; that span reads EDF. T67 is a binding site for Mg(2+). A small ATPAse domain (RuvB-S) region spans residues 183 to 253; it reads STEELTKVIK…FADQALLRLG (71 aa). The tract at residues 256–331 is head domain (RuvB-H); it reads KLGLDRQDIK…SYLNEQTYNM (76 aa). Residues R309 and R314 each contribute to the DNA site.

The protein belongs to the RuvB family. As to quaternary structure, homohexamer. Forms an RuvA(8)-RuvB(12)-Holliday junction (HJ) complex. HJ DNA is sandwiched between 2 RuvA tetramers; dsDNA enters through RuvA and exits via RuvB. An RuvB hexamer assembles on each DNA strand where it exits the tetramer. Each RuvB hexamer is contacted by two RuvA subunits (via domain III) on 2 adjacent RuvB subunits; this complex drives branch migration. In the full resolvosome a probable DNA-RuvA(4)-RuvB(12)-RuvC(2) complex forms which resolves the HJ.

Its subcellular location is the cytoplasm. It catalyses the reaction ATP + H2O = ADP + phosphate + H(+). In terms of biological role, the RuvA-RuvB-RuvC complex processes Holliday junction (HJ) DNA during genetic recombination and DNA repair, while the RuvA-RuvB complex plays an important role in the rescue of blocked DNA replication forks via replication fork reversal (RFR). RuvA specifically binds to HJ cruciform DNA, conferring on it an open structure. The RuvB hexamer acts as an ATP-dependent pump, pulling dsDNA into and through the RuvAB complex. RuvB forms 2 homohexamers on either side of HJ DNA bound by 1 or 2 RuvA tetramers; 4 subunits per hexamer contact DNA at a time. Coordinated motions by a converter formed by DNA-disengaged RuvB subunits stimulates ATP hydrolysis and nucleotide exchange. Immobilization of the converter enables RuvB to convert the ATP-contained energy into a lever motion, pulling 2 nucleotides of DNA out of the RuvA tetramer per ATP hydrolyzed, thus driving DNA branch migration. The RuvB motors rotate together with the DNA substrate, which together with the progressing nucleotide cycle form the mechanistic basis for DNA recombination by continuous HJ branch migration. Branch migration allows RuvC to scan DNA until it finds its consensus sequence, where it cleaves and resolves cruciform DNA. The polypeptide is Holliday junction branch migration complex subunit RuvB (Ehrlichia ruminantium (strain Gardel)).